The following is a 434-amino-acid chain: MASQTPGTEAQSQTVQPGRIAAISLHTSPLDQPGTGDAGGMNVYIVEVAKRLAERGIAVDIFTRATSFEQPPEVELAPGVTVRNIAAGPYGTLDKTALINYLCPFVHGMLRAEAEHLGGSYDLVHTHYWLSGQAGWPVAREWGVPLVHSMHTMARVKNMSLAEGDTPEPEERVRGEDALVALADRLIANTDDEAAQLINYYGASPSRVSTVFPGVDLTTFTPGSRAESLRRLGLPEDTILLLFVGRVQRLKAPDVLLRAAARLLELNPSLRDRLVVAVVGGQSGTGYREPWLLSDLADSLGIADLVRLEPPCPRAELVHYYRAATVTVVPSHSESFGLVAVESQACGTPVVAARVGGLPTAVRDGVSGVLIDGHDPHDYANVLHRMITEPRWRERMGAAGIHHASGLSWESTVDGLLAAYRDALHQCRLTVPCR.

Residue H26 coordinates 1D-myo-inositol 3-phosphate. Residues 32–33 (QP) and G40 each bind UDP-N-acetyl-alpha-D-glucosamine. 1D-myo-inositol 3-phosphate contacts are provided by residues 37-42 (DAGGMN), K95, Y128, T152, and R172. Positions 246 and 251 each coordinate UDP-N-acetyl-alpha-D-glucosamine. The Mg(2+) site is built by Y321, R322, and A324. UDP-N-acetyl-alpha-D-glucosamine-binding residues include E334 and E342. T348 lines the Mg(2+) pocket.

Belongs to the glycosyltransferase group 1 family. MshA subfamily. Homodimer.

The enzyme catalyses 1D-myo-inositol 3-phosphate + UDP-N-acetyl-alpha-D-glucosamine = 1D-myo-inositol 2-acetamido-2-deoxy-alpha-D-glucopyranoside 3-phosphate + UDP + H(+). Functionally, catalyzes the transfer of a N-acetyl-glucosamine moiety to 1D-myo-inositol 3-phosphate to produce 1D-myo-inositol 2-acetamido-2-deoxy-glucopyranoside 3-phosphate in the mycothiol biosynthesis pathway. In Thermobifida fusca (strain YX), this protein is D-inositol 3-phosphate glycosyltransferase.